Consider the following 407-residue polypeptide: Elongation factor Tu (407 aa).

The region spanning Lys10–Glu217 is the tr-type G domain. Positions Gly19 to Thr26 are G1. Residue Gly19–Thr26 participates in GTP binding. Position 26 (Thr26) interacts with Mg(2+). Positions Gly60–Ser64 are G2. The segment at Asp81–Gly84 is G3. Residues Asp81–His85 and Asn136–Asp139 each bind GTP. Residues Asn136–Asp139 form a G4 region. Residues Ser184–Leu186 form a G5 region.

The protein belongs to the TRAFAC class translation factor GTPase superfamily. Classic translation factor GTPase family. EF-Tu/EF-1A subfamily. In terms of assembly, monomer.

It is found in the cytoplasm. The catalysed reaction is GTP + H2O = GDP + phosphate + H(+). GTP hydrolase that promotes the GTP-dependent binding of aminoacyl-tRNA to the A-site of ribosomes during protein biosynthesis. The chain is Elongation factor Tu from Marinomonas sp. (strain MWYL1).